The primary structure comprises 342 residues: Zinc transporter ZIP11 (342 aa).

7 consecutive transmembrane segments (helical) span residues 12–32 (LLGTFFTWGMTAAGAALVFVF), 44–64 (LGFAAGVMLAASYWSLLAPAV), 72–92 (GFGAFAFFPVAVGFTLGAAFV), 194–214 (IALLILAITIHNVPEGLAVGV), 263–285 (FWYGQLSGMVEPLAGVFGAFAVV), 290–307 (ILPYALAFAAGAMVYVVM), and 322–342 (LASWASILGFVVMMSLDVGLG).

The protein belongs to the ZIP transporter (TC 2.A.5) family.

The protein localises to the cell membrane. The protein resides in the nucleus. Its subcellular location is the cytoplasm. It is found in the golgi apparatus. The catalysed reaction is Zn(2+)(in) = Zn(2+)(out). It catalyses the reaction Cu(2+)(in) = Cu(2+)(out). Zinc importer that regulates cytosolic zinc concentrations either via zinc influx from the extracellular compartment or efflux from intracellular organelles such as Golgi apparatus. May transport copper ions as well. The transport mechanism remains to be elucidated. The chain is Zinc transporter ZIP11 (SLC39A11) from Homo sapiens (Human).